The sequence spans 482 residues: Zinc finger protein 223 (482 aa).

A KRAB domain is found at 8–78 (VTFKDVAVVF…DIATQREGNS (71 aa)). C2H2-type zinc fingers lie at residues 176 to 198 (HSCDECGKSFCYISALHIHQRVH), 204 to 226 (FKCDVCGKEFSQSLHLQTHQRVH), 232 to 254 (FKCEQCGRGFRCRSALTVHCKLH), 260 to 282 (YNCEACGRAFIHDFQLQKHQRIH), and 288 to 310 (FKCEICSVSFRLRSSLNRHCVVH). The C2H2-type 6; degenerate zinc finger occupies 316-338 (NSTGEYGKGFIRRLDLCKHQTIH). C2H2-type zinc fingers lie at residues 344-366 (YNCKECGKSFRRSSYLLIHQRVH), 372-394 (YKCDKCGKSYITKSGLDLHHRAH), and 400-422 (YNCDDCGKSFRQASSILNHKRLH). The segment at 428-450 (FKCEDCGKKLVYRSYRKDQQKNH) adopts a C2H2-type 10; degenerate zinc-finger fold.

The protein belongs to the krueppel C2H2-type zinc-finger protein family.

The protein resides in the nucleus. May be involved in transcriptional regulation. The protein is Zinc finger protein 223 (ZNF223) of Homo sapiens (Human).